We begin with the raw amino-acid sequence, 113 residues long: Cell cycle protein GpsB (113 aa).

A coiled-coil region spans residues 36–68 (LDMVIKDYSTFTQEIEALQAENIRLVQELDNAP).

It belongs to the GpsB family. As to quaternary structure, forms polymers through the coiled coil domains. Interacts with PBP1, MreC and EzrA.

It is found in the cytoplasm. In terms of biological role, divisome component that associates with the complex late in its assembly, after the Z-ring is formed, and is dependent on DivIC and PBP2B for its recruitment to the divisome. Together with EzrA, is a key component of the system that regulates PBP1 localization during cell cycle progression. Its main role could be the removal of PBP1 from the cell pole after pole maturation is completed. Also contributes to the recruitment of PBP1 to the division complex. Not essential for septum formation. The sequence is that of Cell cycle protein GpsB from Listeria innocua serovar 6a (strain ATCC BAA-680 / CLIP 11262).